Here is a 361-residue protein sequence, read N- to C-terminus: Phospho-N-acetylmuramoyl-pentapeptide-transferase (361 aa).

The next 10 membrane-spanning stretches (helical) occupy residues 28–48 (LAAL…IRSL), 73–93 (TMGG…WADL), 97–117 (YIWV…VDDY), 134–154 (FFWQ…TADL), 168–188 (VAIP…IVGT), 200–220 (GLAI…AYVA), 237–257 (AGEL…FLWF), 264–284 (VFMG…ITVI), 289–309 (IVLV…MIQV), and 338–358 (QVVV…LSTL).

The protein belongs to the glycosyltransferase 4 family. MraY subfamily. Requires Mg(2+) as cofactor.

It localises to the cell inner membrane. It catalyses the reaction UDP-N-acetyl-alpha-D-muramoyl-L-alanyl-gamma-D-glutamyl-meso-2,6-diaminopimeloyl-D-alanyl-D-alanine + di-trans,octa-cis-undecaprenyl phosphate = di-trans,octa-cis-undecaprenyl diphospho-N-acetyl-alpha-D-muramoyl-L-alanyl-D-glutamyl-meso-2,6-diaminopimeloyl-D-alanyl-D-alanine + UMP. It functions in the pathway cell wall biogenesis; peptidoglycan biosynthesis. In terms of biological role, catalyzes the initial step of the lipid cycle reactions in the biosynthesis of the cell wall peptidoglycan: transfers peptidoglycan precursor phospho-MurNAc-pentapeptide from UDP-MurNAc-pentapeptide onto the lipid carrier undecaprenyl phosphate, yielding undecaprenyl-pyrophosphoryl-MurNAc-pentapeptide, known as lipid I. This Nitrosomonas europaea (strain ATCC 19718 / CIP 103999 / KCTC 2705 / NBRC 14298) protein is Phospho-N-acetylmuramoyl-pentapeptide-transferase.